Here is a 389-residue protein sequence, read N- to C-terminus: Ethanolamine-phosphate cytidylyltransferase (389 aa).

CTP contacts are provided by residues 221–222 (AF), 229–232 (HVDF), K259, 307–310 (HGKT), and 336–340 (SGNDL). 2 positions are modified to phosphothreonine: T341 and T342.

The protein belongs to the cytidylyltransferase family.

The catalysed reaction is phosphoethanolamine + CTP + H(+) = CDP-ethanolamine + diphosphate. It participates in phospholipid metabolism; phosphatidylethanolamine biosynthesis; phosphatidylethanolamine from ethanolamine: step 2/3. Its function is as follows. Ethanolamine-phosphate cytidylyltransferase that catalyzes the second step in the synthesis of phosphatidylethanolamine (PE) from ethanolamine via the CDP-ethanolamine pathway. Phosphatidylethanolamine is a dominant inner-leaflet phospholipid in cell membranes, where it plays a role in membrane function by structurally stabilizing membrane-anchored proteins, and participates in important cellular processes such as cell division, cell fusion, blood coagulation, and apoptosis. This is Ethanolamine-phosphate cytidylyltransferase (PCYT2) from Bos taurus (Bovine).